We begin with the raw amino-acid sequence, 175 residues long: Large ribosomal subunit protein bL17m (175 aa).

The transit peptide at 1–8 (MRLSVCAA) directs the protein to the mitochondrion. The segment at 155 to 175 (DLSQSQEASNHSSHTAQTPGI) is disordered. Positions 157 to 175 (SQSQEASNHSSHTAQTPGI) are enriched in polar residues.

It belongs to the bacterial ribosomal protein bL17 family. As to quaternary structure, component of the mitochondrial ribosome large subunit (39S) which comprises a 16S rRNA and about 50 distinct proteins.

The protein resides in the mitochondrion. The sequence is that of Large ribosomal subunit protein bL17m (MRPL17) from Pongo abelii (Sumatran orangutan).